Consider the following 323-residue polypeptide: THO complex subunit 6 homolog (323 aa).

WD repeat units lie at residues 6–45 (LLHM…SPDA), 58–96 (AHDG…STKA), 108–147 (LEIP…FKSV), 150–189 (GHTD…PVHC), 200–238 (RPQF…PTSV), and 279–321 (CSPS…ALSL).

It belongs to the WD repeat THOC6 family. As to quaternary structure, component of the THO subcomplex, which is composed of thoc1, thoc2, thoc3, thoc5, thoc6 and thoc7. Component of the transcription/export (TREX) complex at least composed of alyref/thoc4, ddx39b, sarnp/cip29, chtop and the THO subcomplex.

Its subcellular location is the nucleus. It localises to the nucleus speckle. Its function is as follows. Component of the THO subcomplex of the TREX complex which is thought to couple mRNA transcription, processing and nuclear export, and which specifically associates with spliced mRNA and not with unspliced pre-mRNA. Plays a key structural role in the oligomerization of the THO-DDX39B complex. TREX is recruited to spliced mRNAs by a transcription-independent mechanism, binds to mRNA upstream of the exon-junction complex (EJC) and is recruited in a splicing- and cap-dependent manner to a region near the 5' end of the mRNA where it functions in mRNA export to the cytoplasm via the TAP/NXF1 pathway. Plays a role in apoptosis negative control involved in brain development. The protein is THO complex subunit 6 homolog (thoc6) of Danio rerio (Zebrafish).